The primary structure comprises 149 residues: Large ribosomal subunit protein uL15 (149 aa).

2 stretches are compositionally biased toward basic residues: residues 1 to 14 (MPSRFTKTRKHRGH) and 21 to 30 (RIGKHRKHPG). Positions 1-39 (MPSRFTKTRKHRGHVSAGKGRIGKHRKHPGGRGMAGGQH) are disordered. 2 consecutive short sequence motifs (nuclear localization signal) follow at residues 7–13 (KTRKHRG) and 24–30 (KHRKHPG). A Glycyl lysine isopeptide (Lys-Gly) (interchain with G-Cter in ubiquitin) cross-link involves residue Lys-96.

It belongs to the universal ribosomal protein uL15 family. Component of the large ribosomal subunit (LSU). Mature yeast ribosomes consist of a small (40S) and a large (60S) subunit. The 40S small subunit contains 1 molecule of ribosomal RNA (18S rRNA) and 33 different proteins (encoded by 57 genes). The large 60S subunit contains 3 rRNA molecules (25S, 5.8S and 5S rRNA) and 46 different proteins (encoded by 81 genes).

It is found in the cytoplasm. In terms of biological role, component of the ribosome, a large ribonucleoprotein complex responsible for the synthesis of proteins in the cell. The small ribosomal subunit (SSU) binds messenger RNAs (mRNAs) and translates the encoded message by selecting cognate aminoacyl-transfer RNA (tRNA) molecules. The large subunit (LSU) contains the ribosomal catalytic site termed the peptidyl transferase center (PTC), which catalyzes the formation of peptide bonds, thereby polymerizing the amino acids delivered by tRNAs into a polypeptide chain. The nascent polypeptides leave the ribosome through a tunnel in the LSU and interact with protein factors that function in enzymatic processing, targeting, and the membrane insertion of nascent chains at the exit of the ribosomal tunnel. The protein is Large ribosomal subunit protein uL15 of Saccharomyces cerevisiae (strain ATCC 204508 / S288c) (Baker's yeast).